The primary structure comprises 404 residues: Exodeoxyribonuclease 7 large subunit (404 aa).

This sequence belongs to the XseA family. Heterooligomer composed of large and small subunits.

It is found in the cytoplasm. It catalyses the reaction Exonucleolytic cleavage in either 5'- to 3'- or 3'- to 5'-direction to yield nucleoside 5'-phosphates.. Bidirectionally degrades single-stranded DNA into large acid-insoluble oligonucleotides, which are then degraded further into small acid-soluble oligonucleotides. This chain is Exodeoxyribonuclease 7 large subunit, found in Ruminiclostridium cellulolyticum (strain ATCC 35319 / DSM 5812 / JCM 6584 / H10) (Clostridium cellulolyticum).